The primary structure comprises 298 residues: N-acetylmuramic acid 6-phosphate etherase (298 aa).

One can recognise an SIS domain in the interval 55–218; that stretch reads IHTQVSGGGR…STGLMIKSGK (164 aa). Catalysis depends on Glu83, which acts as the Proton donor. Glu114 is an active-site residue.

The protein belongs to the GCKR-like family. MurNAc-6-P etherase subfamily. As to quaternary structure, homodimer.

It carries out the reaction N-acetyl-D-muramate 6-phosphate + H2O = N-acetyl-D-glucosamine 6-phosphate + (R)-lactate. It participates in amino-sugar metabolism; 1,6-anhydro-N-acetylmuramate degradation. Its pathway is amino-sugar metabolism; N-acetylmuramate degradation. The protein operates within cell wall biogenesis; peptidoglycan recycling. In terms of biological role, specifically catalyzes the cleavage of the D-lactyl ether substituent of MurNAc 6-phosphate, producing GlcNAc 6-phosphate and D-lactate. Together with AnmK, is also required for the utilization of anhydro-N-acetylmuramic acid (anhMurNAc) either imported from the medium or derived from its own cell wall murein, and thus plays a role in cell wall recycling. The sequence is that of N-acetylmuramic acid 6-phosphate etherase from Escherichia coli O6:K15:H31 (strain 536 / UPEC).